The sequence spans 386 residues: Innexin unc-9 (386 aa).

The next 4 helical transmembrane spans lie at 33–53, 103–123, 197–217, and 282–302; these read TAII…GFPI, QWVP…TIVW, FLYI…IFLL, and IFLF…CSLF.

It belongs to the pannexin family. As to quaternary structure, heterooligomer of unc-7 and unc-9. Interacts with F-actin. Expressed in PLM neurons (at protein level). Expressed in the nerve ring.

The protein resides in the cell membrane. The protein localises to the cell junction. Its subcellular location is the gap junction. Structural component of gap junctions. Plays a role in maintaining gap junction activity to promote locomotion. This chain is Innexin unc-9, found in Caenorhabditis elegans.